Consider the following 485-residue polypeptide: Protein DETOXIFICATION 14 (485 aa).

12 consecutive transmembrane segments (helical) span residues 30-50 (LSYIAGPMIAVNSSMYVLQVI), 68-88 (IAVSFCSVTGFSVVFGLASAL), 112-132 (IVSLFLVCIPLSLLWTYIGDI), 147-167 (GKFATWLIPALFGYATLQPLV), 175-195 (LILPLVMSSVSSLCIHIVLCW), 207-227 (GAAIAIGVSYWLNVTVLGLYM), 259-279 (ASMICLEWWSFEFLVLLSGIL), 288-308 (VLSVCLSTQSSLYQIPESLGA), 329-349 (AVYTAMVITGVESIMVGAIVF), 372-392 (MAPLLSLSVIFDALHAALSGV), 405-425 (VNLAAYYLFGIPTAILLAFGF), and 432-452 (LWIGITVGSCVQAVLLGLIVI).

Belongs to the multi antimicrobial extrusion (MATE) (TC 2.A.66.1) family.

Its subcellular location is the membrane. This Arabidopsis thaliana (Mouse-ear cress) protein is Protein DETOXIFICATION 14.